We begin with the raw amino-acid sequence, 350 residues long: Protein O-mannose kinase (350 aa).

At methionine 1 the chain carries N-acetylmethionine. Topologically, residues 1–20 are cytoplasmic; that stretch reads MEKQPQNKRRGLAPREVPPA. The helical; Signal-anchor for type II membrane protein transmembrane segment at 21-43 threads the bilayer; the sequence is VGLLLIMALMNTLLYLCLDHFFI. Over 44-350 the chain is Lumenal; that stretch reads APRQSIVDPR…AVMSQAREML (307 aa). One can recognise a Protein kinase domain in the interval 81–350; that stretch reads VRQLKRVGEG…AVMSQAREML (270 aa). Asparagine 165, asparagine 220, and asparagine 235 each carry an N-linked (GlcNAc...) asparagine glycan.

Belongs to the protein kinase superfamily. Ser/Thr protein kinase family. STKL subfamily.

The protein localises to the endoplasmic reticulum membrane. The enzyme catalyses 3-O-[beta-D-GalNAc-(1-&gt;3)-beta-D-GlcNAc-(1-&gt;4)-alpha-D-Man]-L-Thr-[protein] + ATP = 3-O-[beta-D-GalNAc-(1-&gt;3)-beta-D-GlcNAc-(1-&gt;4)-(O-6-P-alpha-D-Man)]-Thr-[protein] + ADP + H(+). Its function is as follows. Protein O-mannose kinase that specifically mediates phosphorylation at the 6-position of an O-mannose of the trisaccharide (N-acetylgalactosamine (GalNAc)-beta-1,3-N-acetylglucosamine (GlcNAc)-beta-1,4-mannose) to generate phosphorylated O-mannosyl trisaccharide (N-acetylgalactosamine-beta-1,3-N-acetylglucosamine-beta-1,4-(phosphate-6-)mannose). Phosphorylated O-mannosyl trisaccharide is a carbohydrate structure present in alpha-dystroglycan (DAG1), which is required for binding laminin G-like domain-containing extracellular proteins with high affinity. Only shows kinase activity when the GalNAc-beta-3-GlcNAc-beta-terminus is linked to the 4-position of O-mannose, suggesting that this disaccharide serves as the substrate recognition motif. The polypeptide is Protein O-mannose kinase (POMK) (Macaca fascicularis (Crab-eating macaque)).